A 253-amino-acid chain; its full sequence is Redox-sensing transcriptional repressor Rex (253 aa).

Positions 26–65 form a DNA-binding region, H-T-H motif; sequence LYLRALTALSERSVPTVSSEELATAAGVNSAKLRKDFSYL. Residue 100-105 participates in NAD(+) binding; it reads GIGNLG. The segment at 217-253 is disordered; it reads RKAGEDSAAEDEGAPPMRATPASRKGPDGDMPAVMPA.

The protein belongs to the transcriptional regulatory Rex family. In terms of assembly, homodimer.

The protein resides in the cytoplasm. Functionally, modulates transcription in response to changes in cellular NADH/NAD(+) redox state. The chain is Redox-sensing transcriptional repressor Rex from Streptomyces griseus subsp. griseus (strain JCM 4626 / CBS 651.72 / NBRC 13350 / KCC S-0626 / ISP 5235).